Reading from the N-terminus, the 252-residue chain is Putative peptide zinc metalloprotease protein YydH (252 aa).

The next 2 membrane-spanning stretches (helical) occupy residues 56–76 (FFYL…IHLI) and 85–105 (VFYG…NIVL). Position 106 (H106) interacts with Zn(2+). E107 is a catalytic residue. Zn(2+) is bound at residue H110. 3 consecutive transmembrane segments (helical) span residues 152 to 172 (IIVH…LELI), 181 to 201 (ALTM…IPIL), and 231 to 251 (IQII…LYIV).

It belongs to the peptidase M50B family. The cofactor is Zn(2+).

The protein resides in the cell membrane. Functionally, required for production of the modified peptide YydF. May process the precursor form of YydF to release the active peptide (Potential). The chain is Putative peptide zinc metalloprotease protein YydH (yydH) from Bacillus subtilis (strain 168).